A 196-amino-acid polypeptide reads, in one-letter code: UPF0056 membrane protein BUsg_434 (196 aa).

6 consecutive transmembrane segments (helical) span residues 8-28 (TILLILIMDPLGNLPIFMTIL), 45-65 (IIALIVMLIFLFVGEKILTIL), 71-91 (TVSISGGIILFLIAIKMIFPS), 105-125 (FLVPLAIPLVAGPSLLATLML), 134-154 (MPYLVGSLLIAWFFTIIILLL), and 174-194 (MGLILIMLSTQMFLDGIKAWF).

This sequence belongs to the UPF0056 (MarC) family.

The protein localises to the cell membrane. This chain is UPF0056 membrane protein BUsg_434, found in Buchnera aphidicola subsp. Schizaphis graminum (strain Sg).